Reading from the N-terminus, the 284-residue chain is Bifunctional protein FolD (284 aa).

NADP(+)-binding positions include 164–166 and serine 189; that span reads GRS.

The protein belongs to the tetrahydrofolate dehydrogenase/cyclohydrolase family. As to quaternary structure, homodimer.

The enzyme catalyses (6R)-5,10-methylene-5,6,7,8-tetrahydrofolate + NADP(+) = (6R)-5,10-methenyltetrahydrofolate + NADPH. The catalysed reaction is (6R)-5,10-methenyltetrahydrofolate + H2O = (6R)-10-formyltetrahydrofolate + H(+). It functions in the pathway one-carbon metabolism; tetrahydrofolate interconversion. In terms of biological role, catalyzes the oxidation of 5,10-methylenetetrahydrofolate to 5,10-methenyltetrahydrofolate and then the hydrolysis of 5,10-methenyltetrahydrofolate to 10-formyltetrahydrofolate. This chain is Bifunctional protein FolD, found in Listeria monocytogenes serovar 1/2a (strain ATCC BAA-679 / EGD-e).